Here is a 661-residue protein sequence, read N- to C-terminus: Centrosomal protein of 76 kDa (661 aa).

This sequence belongs to the CEP76 family.

The protein resides in the cytoplasm. It localises to the cytoskeleton. The protein localises to the microtubule organizing center. Its subcellular location is the centrosome. It is found in the centriole. In terms of biological role, centrosomal protein involved in regulation of centriole duplication. Required to limit centriole duplication to once per cell cycle by preventing centriole reduplication. This chain is Centrosomal protein of 76 kDa (cep76), found in Xenopus tropicalis (Western clawed frog).